The primary structure comprises 299 residues: Oxygen-dependent coproporphyrinogen-III oxidase (299 aa).

Ser92 lines the substrate pocket. The Mn(2+) site is built by His96 and His106. The active-site Proton donor is the His106. Residue Asn108 to Arg110 coordinates substrate. Mn(2+)-binding residues include His145 and His175. The segment at Tyr240–Glu275 is important for dimerization. Position 258–260 (Gly258–Arg260) interacts with substrate.

It belongs to the aerobic coproporphyrinogen-III oxidase family. As to quaternary structure, homodimer. Mn(2+) serves as cofactor.

The protein localises to the cytoplasm. The catalysed reaction is coproporphyrinogen III + O2 + 2 H(+) = protoporphyrinogen IX + 2 CO2 + 2 H2O. The protein operates within porphyrin-containing compound metabolism; protoporphyrin-IX biosynthesis; protoporphyrinogen-IX from coproporphyrinogen-III (O2 route): step 1/1. Its function is as follows. Involved in the heme biosynthesis. Catalyzes the aerobic oxidative decarboxylation of propionate groups of rings A and B of coproporphyrinogen-III to yield the vinyl groups in protoporphyrinogen-IX. The polypeptide is Oxygen-dependent coproporphyrinogen-III oxidase (Escherichia coli O8 (strain IAI1)).